Here is a 75-residue protein sequence, read N- to C-terminus: Small ribosomal subunit protein bS18c (75 aa).

It belongs to the bacterial ribosomal protein bS18 family. As to quaternary structure, part of the 30S ribosomal subunit.

Its subcellular location is the plastid. It localises to the chloroplast. This Marchantia polymorpha (Common liverwort) protein is Small ribosomal subunit protein bS18c (rps18).